Reading from the N-terminus, the 86-residue chain is Small ribosomal subunit protein uS15 (86 aa).

A compositionally biased stretch (polar residues) spans 1-10 (MSIDTQSIIE). Residues 1-21 (MSIDTQSIIENNKRSAHDTGS) are disordered.

It belongs to the universal ribosomal protein uS15 family. Part of the 30S ribosomal subunit. Forms a bridge to the 50S subunit in the 70S ribosome, contacting the 23S rRNA.

Its function is as follows. One of the primary rRNA binding proteins, it binds directly to 16S rRNA where it helps nucleate assembly of the platform of the 30S subunit by binding and bridging several RNA helices of the 16S rRNA. In terms of biological role, forms an intersubunit bridge (bridge B4) with the 23S rRNA of the 50S subunit in the ribosome. This chain is Small ribosomal subunit protein uS15, found in Xylella fastidiosa (strain M23).